A 168-amino-acid polypeptide reads, in one-letter code: Photosystem I assembly protein Ycf3 (168 aa).

TPR repeat units lie at residues 35 to 68 (AFTY…EIDP), 72 to 105 (SYIL…NPFL), and 120 to 153 (GEQA…TPGN).

It belongs to the Ycf3 family.

Its subcellular location is the plastid. The protein resides in the chloroplast thylakoid membrane. In terms of biological role, essential for the assembly of the photosystem I (PSI) complex. May act as a chaperone-like factor to guide the assembly of the PSI subunits. This is Photosystem I assembly protein Ycf3 from Solanum lycopersicum (Tomato).